The sequence spans 328 residues: Dof zinc finger protein PBF (328 aa).

Residues 33–56 (RDPKQTRAMPQIGGSGERKPRPQL) are disordered. Residues 60–114 (LKCPRCDSNNTKFCYYNNYSMSQPRYFCKACRRYWTHGGTLRNVPIGGGCRKNKH) form a Dof-type zinc finger. Cys-62, Cys-65, Cys-87, and Cys-90 together coordinate Zn(2+). Disordered stretches follow at residues 124–144 (TSSS…ASSS) and 306–328 (WNKH…NKGQ).

In terms of assembly, interacts with the bZIP transcription factor Opaque-2/O2. As to expression, seed endosperm.

It is found in the nucleus. Functionally, transcription factor that binds specifically to a 5'-AA[AG]G-3' consensus core sequence. May enhance the DNA binding of the bZIP transcription factor Opaque-2 to O2 binding site elements. The chain is Dof zinc finger protein PBF (PBF) from Zea mays (Maize).